Consider the following 193-residue polypeptide: uncharacterized protein (193 aa).

Residues 1–84 form a disordered region; sequence MTSKCSKWHE…RRSNQRIQLY (84 aa). The span at 43–78 shows a compositional bias: basic residues; that stretch reads SSPRRSSPRRSPRRSSPRRSSPRRSSPRRSSPRRSN.

The protein belongs to the IIV-6 378R family.

This is an uncharacterized protein from Invertebrate iridescent virus 6 (IIV-6).